We begin with the raw amino-acid sequence, 362 residues long: Large ribosomal subunit protein uL2m (362 aa).

The transit peptide at 1–23 directs the protein to the mitochondrion; that stretch reads MLSYNRFRGYLIPQIHALKLFRY. The interval 306–362 is disordered; it reads AMNPCDHPHGGGGGKSIGNKPSQSPWGVLAKGGYKTRRGKNVNKLLVRDRPRGKEKR. Basic and acidic residues predominate over residues 351–362; sequence LVRDRPRGKEKR.

The protein belongs to the universal ribosomal protein uL2 family. In terms of assembly, component of the mitochondrial large ribosomal subunit (mt-LSU). Mature yeast 74S mitochondrial ribosomes consist of a small (37S) and a large (54S) subunit. The 37S small subunit contains a 15S ribosomal RNA (15S mt-rRNA) and at least 32 different proteins. The 54S large subunit contains a 21S rRNA (21S mt-rRNA) and at least 45 different proteins. uL2m has a Na/K ligand binding site.

It is found in the mitochondrion. Component of the mitochondrial ribosome (mitoribosome), a dedicated translation machinery responsible for the synthesis of mitochondrial genome-encoded proteins, including at least some of the essential transmembrane subunits of the mitochondrial respiratory chain. The mitoribosomes are attached to the mitochondrial inner membrane and translation products are cotranslationally integrated into the membrane. This is Large ribosomal subunit protein uL2m (rml2) from Schizosaccharomyces pombe (strain 972 / ATCC 24843) (Fission yeast).